Here is a 2136-residue protein sequence, read N- to C-terminus: U5 small nuclear ribonucleoprotein 200 kDa helicase (2136 aa).

2 positions are modified to phosphoserine: serine 17 and serine 26. Lysine 46 is covalently cross-linked (Glycyl lysine isopeptide (Lys-Gly) (interchain with G-Cter in SUMO2)). The segment at 50 to 80 is disordered; sequence TRMGDKAQRTKPQMQEERRAKRRKRDEDRHD. Residues 54-84 are a coiled coil; that stretch reads DKAQRTKPQMQEERRAKRRKRDEDRHDINKM. Residue serine 225 is modified to Phosphoserine. Residue threonine 389 is modified to Phosphothreonine. The tract at residues 395 to 2129 is interaction with C9orf78 and WBP4; the sequence is DLDQGGEALA…YKFSVDVKEA (1735 aa). The region spanning 490 to 673 is the Helicase ATP-binding 1 domain; sequence RAALETDENL…FLRVDPAKGL (184 aa). An ATP-binding site is contributed by 503-510; it reads APTGAGKT. Residues 615 to 618 carry the DEIH box motif; sequence DEIH. A Helicase C-terminal 1 domain is found at 684–921; that stretch reads PLEQTYVGIT…NAKDAVNWLG (238 aa). Tyrosine 709 is modified (phosphotyrosine). Lysine 971 carries the post-translational modification N6-acetyllysine. Residues 981-1286 form the SEC63 1 domain; the sequence is VTELGRIASH…SCETQLPVSF (306 aa). Positions 1282 to 2136 are interaction with TSSC4; sequence LPVSFRHLIL…KEAETDSDSD (855 aa). Residues 1337–1512 form the Helicase ATP-binding 2 domain; the sequence is NTVYNSDDNV…WLGCSATSTF (176 aa). An ATP-binding site is contributed by 1350 to 1357; the sequence is APTGSGKT. Threonine 1428 carries the post-translational modification Phosphothreonine. A DEVH box motif is present at residues 1454 to 1457; it reads DEVH. Residues 1545–1753 form the Helicase C-terminal 2 domain; it reads PVYHAITKHS…TIENKQDAVD (209 aa). Residue threonine 1765 is modified to Phosphothreonine. The 313-residue stretch at 1812–2124 folds into the SEC63 2 domain; it reads PLNLGMIAAY…GCDQEYKFSV (313 aa). Serine 2002 carries the post-translational modification Phosphoserine. Threonine 2131 bears the Phosphothreonine mark. 2 positions are modified to phosphoserine: serine 2133 and serine 2135.

Belongs to the helicase family. SKI2 subfamily. Component of a core complex containing at least PRPF8, SNRNP200, EFTUD2 and SNRNP40. Component of the U5 snRNP and U4/U6-U5 tri-snRNP complexes, building blocks of the spliceosome. Component of the U4/U6-U5 tri-snRNP complex composed of the U4, U6 and U5 snRNAs and at least PRPF3, PRPF4, PRPF6, PRPF8, PRPF31, SNRNP200, TXNL4A, SNRNP40, DDX23, CD2BP2, PPIH, SNU13, EFTUD2, SART1 and USP39. Component of precatalytic, catalytic and postcatalytic spliceosomal complexes. Component of the minor spliceosome, which splices U12-type introns. Interacts with C9orf78; the interaction is direct and mutually exclusive with its interaction with WBP4. Interacts with WBP4; the interaction is mutually exclusive with its interaction with C9orf78. Interacts with PRPF8. Interacts with TSSC4; the interaction is direct, excludes recruitment of C9ORF78 and WBP4 to SNRNP200 and negatively regulates its RNA helicase activity. Widely expressed.

It localises to the nucleus. It catalyses the reaction ATP + H2O = ADP + phosphate + H(+). Functionally, catalyzes the ATP-dependent unwinding of U4/U6 RNA duplices, an essential step in the assembly of a catalytically active spliceosome. Plays a role in pre-mRNA splicing as a core component of precatalytic, catalytic and postcatalytic spliceosomal complexes. As a component of the minor spliceosome, involved in the splicing of U12-type introns in pre-mRNAs. Involved in spliceosome assembly, activation and disassembly. Mediates changes in the dynamic network of RNA-RNA interactions in the spliceosome. The protein is U5 small nuclear ribonucleoprotein 200 kDa helicase (SNRNP200) of Homo sapiens (Human).